Here is a 160-residue protein sequence, read N- to C-terminus: Lipoprotein signal peptidase (160 aa).

The next 2 helical transmembrane spans lie at 59–79 (PEGI…YVWI) and 84–104 (SPLF…NLID). Residues Asp113 and Asp139 contribute to the active site. The helical transmembrane segment at 132–152 (WPIFNIADACITIGACLLFFF) threads the bilayer.

Belongs to the peptidase A8 family.

The protein localises to the cell inner membrane. It carries out the reaction Release of signal peptides from bacterial membrane prolipoproteins. Hydrolyzes -Xaa-Yaa-Zaa-|-(S,diacylglyceryl)Cys-, in which Xaa is hydrophobic (preferably Leu), and Yaa (Ala or Ser) and Zaa (Gly or Ala) have small, neutral side chains.. Its pathway is protein modification; lipoprotein biosynthesis (signal peptide cleavage). In terms of biological role, this protein specifically catalyzes the removal of signal peptides from prolipoproteins. This is Lipoprotein signal peptidase from Chlorobaculum parvum (strain DSM 263 / NCIMB 8327) (Chlorobium vibrioforme subsp. thiosulfatophilum).